Consider the following 497-residue polypeptide: Glycerol kinase (497 aa).

Thr13 provides a ligand contact to ADP. Residues Thr13, Thr14, and Ser15 each coordinate ATP. Thr13 lines the sn-glycerol 3-phosphate pocket. ADP is bound at residue Arg17. The sn-glycerol 3-phosphate site is built by Arg83, Glu84, and Tyr135. Residues Arg83, Glu84, and Tyr135 each contribute to the glycerol site. His231 carries the phosphohistidine; by HPr modification. Position 245 (Asp245) interacts with sn-glycerol 3-phosphate. Glycerol-binding residues include Asp245 and Gln246. Residues Thr267 and Gly310 each contribute to the ADP site. Residues Thr267, Gly310, Gln314, and Gly411 each coordinate ATP. Positions 411 and 415 each coordinate ADP.

This sequence belongs to the FGGY kinase family. Homotetramer and homodimer (in equilibrium). The phosphoenolpyruvate-dependent sugar phosphotransferase system (PTS), including enzyme I, and histidine-containing protein (HPr) are required for the phosphorylation, which leads to the activation of the enzyme.

The catalysed reaction is glycerol + ATP = sn-glycerol 3-phosphate + ADP + H(+). The protein operates within polyol metabolism; glycerol degradation via glycerol kinase pathway; sn-glycerol 3-phosphate from glycerol: step 1/1. With respect to regulation, activated by phosphorylation and inhibited by fructose 1,6-bisphosphate (FBP). In terms of biological role, key enzyme in the regulation of glycerol uptake and metabolism. Catalyzes the phosphorylation of glycerol to yield sn-glycerol 3-phosphate. The polypeptide is Glycerol kinase (Listeria monocytogenes serotype 4b (strain F2365)).